The following is a 277-amino-acid chain: Large ribosomal subunit protein uL2 (277 aa).

Positions 219–277 (TVRGSVMNPNDHPHGGGEGKAPVGRKAPSTPWGKPALGLKTRNKKAKSDKLIVRRRNEK) are disordered. The span at 264-277 (AKSDKLIVRRRNEK) shows a compositional bias: basic and acidic residues.

The protein belongs to the universal ribosomal protein uL2 family. Part of the 50S ribosomal subunit. Forms a bridge to the 30S subunit in the 70S ribosome.

Functionally, one of the primary rRNA binding proteins. Required for association of the 30S and 50S subunits to form the 70S ribosome, for tRNA binding and peptide bond formation. It has been suggested to have peptidyltransferase activity; this is somewhat controversial. Makes several contacts with the 16S rRNA in the 70S ribosome. This Streptococcus pyogenes serotype M1 protein is Large ribosomal subunit protein uL2.